The chain runs to 294 residues: Probable enoyl-CoA hydratase echA12 (294 aa).

Belongs to the enoyl-CoA hydratase/isomerase family.

The enzyme catalyses a (3S)-3-hydroxyacyl-CoA = a (2E)-enoyl-CoA + H2O. It carries out the reaction a 4-saturated-(3S)-3-hydroxyacyl-CoA = a (3E)-enoyl-CoA + H2O. Could possibly oxidize fatty acids using specific components. The sequence is that of Probable enoyl-CoA hydratase echA12 (echA12) from Mycobacterium leprae (strain TN).